A 66-amino-acid polypeptide reads, in one-letter code: Sodium channel alpha-toxin Acra8 (66 aa).

Residues 2-64 (RDGYIVDDKN…VPIKEKGRCN (63 aa)) form the LCN-type CS-alpha/beta domain. 4 disulfides stabilise this stretch: Cys-12–Cys-63, Cys-16–Cys-36, Cys-22–Cys-46, and Cys-26–Cys-48. Asn-64 carries the post-translational modification Asparagine amide. The propeptide occupies 65–66 (GR).

Belongs to the long (4 C-C) scorpion toxin superfamily. Sodium channel inhibitor family. Alpha subfamily. In terms of tissue distribution, expressed by the venom gland.

Its subcellular location is the secreted. In terms of biological role, alpha toxins bind voltage-independently at site-3 of sodium channels (Nav) and inhibit the inactivation of the activated channels, thereby blocking neuronal transmission. This is Sodium channel alpha-toxin Acra8 from Androctonus crassicauda (Arabian fat-tailed scorpion).